Here is a 56-residue protein sequence, read N- to C-terminus: Large ribosomal subunit protein bL32 (56 aa).

The interval 1–26 is disordered; sequence MAVQQNKKSRSKRGMRRSHDALSTAQ. The segment covering 7–16 has biased composition (basic residues); the sequence is KKSRSKRGMR.

It belongs to the bacterial ribosomal protein bL32 family.

The chain is Large ribosomal subunit protein bL32 from Shewanella amazonensis (strain ATCC BAA-1098 / SB2B).